The chain runs to 229 residues: MSTWANLGLQDSASPLMEQLIFFHDHALLILVMITVLVGYLMFMLFFNSYVNRFLLHGQLIEMIWTILPAIILLFIAMPSLRLLYLLDEINEPSITLKSIGHQWYWSYEYSDFNNVEFDSYMIPTNELANDGFRLLDVDNRIVLPMNSQIRILVTAADVIHSWTVPALGVKVDGTPGRLNQTNFFINRPGLFYGQCSEICGANHSFMPIVIESVPVNYFIKWISNSVNS.

At 1-26 (MSTWANLGLQDSASPLMEQLIFFHDH) the chain is on the mitochondrial intermembrane side. A helical transmembrane segment spans residues 27-48 (ALLILVMITVLVGYLMFMLFFN). Residues 49–62 (SYVNRFLLHGQLIE) are Mitochondrial matrix-facing. Residues 63 to 82 (MIWTILPAIILLFIAMPSLR) form a helical membrane-spanning segment. At 83 to 229 (LLYLLDEINE…IKWISNSVNS (147 aa)) the chain is on the mitochondrial intermembrane side. 6 residues coordinate Cu cation: His-161, Cys-196, Glu-198, Cys-200, His-204, and Met-207. Position 198 (Glu-198) interacts with Mg(2+).

Belongs to the cytochrome c oxidase subunit 2 family. In terms of assembly, component of the cytochrome c oxidase (complex IV, CIV), a multisubunit enzyme composed of a catalytic core of 3 subunits and several supernumerary subunits. The complex exists as a monomer or a dimer and forms supercomplexes (SCs) in the inner mitochondrial membrane with ubiquinol-cytochrome c oxidoreductase (cytochrome b-c1 complex, complex III, CIII). It depends on Cu cation as a cofactor.

The protein localises to the mitochondrion inner membrane. The catalysed reaction is 4 Fe(II)-[cytochrome c] + O2 + 8 H(+)(in) = 4 Fe(III)-[cytochrome c] + 2 H2O + 4 H(+)(out). Functionally, component of the cytochrome c oxidase, the last enzyme in the mitochondrial electron transport chain which drives oxidative phosphorylation. The respiratory chain contains 3 multisubunit complexes succinate dehydrogenase (complex II, CII), ubiquinol-cytochrome c oxidoreductase (cytochrome b-c1 complex, complex III, CIII) and cytochrome c oxidase (complex IV, CIV), that cooperate to transfer electrons derived from NADH and succinate to molecular oxygen, creating an electrochemical gradient over the inner membrane that drives transmembrane transport and the ATP synthase. Cytochrome c oxidase is the component of the respiratory chain that catalyzes the reduction of oxygen to water. Electrons originating from reduced cytochrome c in the intermembrane space (IMS) are transferred via the dinuclear copper A center (CU(A)) of subunit 2 and heme A of subunit 1 to the active site in subunit 1, a binuclear center (BNC) formed by heme A3 and copper B (CU(B)). The BNC reduces molecular oxygen to 2 water molecules using 4 electrons from cytochrome c in the IMS and 4 protons from the mitochondrial matrix. The polypeptide is Cytochrome c oxidase subunit 2 (mt:CoII) (Drosophila affinis (Fruit fly)).